Consider the following 590-residue polypeptide: Vesicular glutamate transporter 3 (590 aa).

Over 1–76 (MPLGGFAGLK…CGCFGLPKRY (76 aa)) the chain is Cytoplasmic. The chain crosses the membrane as a helical span at residues 77-97 (IIAMLSGLGFCISFGIRCNLG). Topologically, residues 98–130 (VAIVEMVNNNTVYINGTAVMQPAQFNWDPETVG) are vesicular. Asparagine 106 and asparagine 112 each carry an N-linked (GlcNAc...) asparagine glycan. The chain crosses the membrane as a helical span at residues 131-151 (LIHGSFFWGYIVTQIPGGFIS). Topologically, residues 152-153 (NK) are cytoplasmic. Residues 154–174 (LAANRVFGAAIFLTSVLNMFI) form a helical membrane-spanning segment. Over 175 to 182 (PSAARVHY) the chain is Vesicular. A helical transmembrane segment spans residues 183–203 (GCVMFVRILQGLVEGVTYPAC). Residues 204-221 (HGMWSKWAPPLERSRLAT) lie on the Cytoplasmic side of the membrane. Residues 222–242 (TSFCGSYAGAVIAMPLAGILV) form a helical membrane-spanning segment. Residues 243–249 (QYVGWPS) are Vesicular-facing. Residues 250-270 (VFYIYGVFGIIWYIFWILLAY) form a helical membrane-spanning segment. Residues 271 to 315 (NSPAVHPTISEEERNYIETSIGEGANLMSSTEKFKTPWREFFTSM) lie on the Cytoplasmic side of the membrane. Residues 316–336 (PVYAIIVANFCRSWTFYLLLI) form a helical membrane-spanning segment. The Vesicular portion of the chain corresponds to 337–354 (SQPAYFEEVFGFPISKVG). A helical membrane pass occupies residues 355–375 (ILSAVPHMVMTIIVPIGGQLA). Residues 376 to 391 (DFLRSRKILSTTTVRK) lie on the Cytoplasmic side of the membrane. A helical membrane pass occupies residues 392–412 (IMNCGGFGMEATLLLVVGFSH). The Vesicular portion of the chain corresponds to 413–414 (TR). A helical membrane pass occupies residues 415–435 (AVAISFLILAVGFSGFAISGF). The Cytoplasmic segment spans residues 436 to 448 (NVNHLDIAPRYAS). The helical transmembrane segment at 449–469 (ILMGISNGVGTLSGMVCPLIV) threads the bilayer. The Vesicular portion of the chain corresponds to 470 to 482 (GALTKHKTRLEWQ). The chain crosses the membrane as a helical span at residues 483–503 (HVFVIASMVHYTGVIFYAIFA). The Cytoplasmic portion of the chain corresponds to 504–587 (SGEKQDWADP…NHYENGEYQT (84 aa)). The segment covering 526-535 (EDELADETEP) has biased composition (acidic residues). Residues 526–590 (EDELADETEP…ENGEYQTQYQ (65 aa)) are disordered. Polar residues predominate over residues 536–557 (SSDSGLATRQKTYGTTDNSSGR).

This sequence belongs to the major facilitator superfamily. Sodium/anion cotransporter family. VGLUT subfamily.

Its subcellular location is the cytoplasmic vesicle. It is found in the secretory vesicle. It localises to the synaptic vesicle membrane. The protein localises to the cell membrane. The protein resides in the synapse. Its subcellular location is the synaptosome. It carries out the reaction L-glutamate(out) = L-glutamate(in). The enzyme catalyses 3 Na(+)(out) + phosphate(out) = 3 Na(+)(in) + phosphate(in). It catalyses the reaction chloride(in) = chloride(out). With respect to regulation, the L-glutamate uniporter activity exhibits a biphasic dependence on chloride concentration. Chloride channel activity is allosterically activated by lumenal H(+) and Cl(-) leading to synaptic vesicles acidification. The glutamate transport activity is allosterically activated by lumenal H(+) and Cl(-), preventing non-vesicular L-glutamate release. Multifunctional transporter that transports L-glutamate as well as multiple ions such as chloride, sodium and phosphate. At the synaptic vesicle membrane, mainly functions as an uniporter that mediates the uptake of L-glutamate into synaptic vesicles at presynaptic nerve terminals of excitatory neural cells. The L-glutamate uniporter activity is electrogenic and is driven by the proton electrochemical gradient, mainly by the electrical gradient established by the vacuolar H(+)-ATPase across the synaptic vesicle membrane. In addition, functions as a chloride channel that allows a chloride permeation through the synaptic vesicle membrane that affects the proton electrochemical gradient and promotes synaptic vesicles acidification. At the plasma membrane, following exocytosis, functions as a symporter of Na(+) and phosphate from the extracellular space to the cytoplasm allowing synaptic phosphate homeostasis regulation. The symporter activity is electrogenic. Moreover, operates synergistically with SLC18A3/VACHT under a constant H(+) gradient, thereby allowing striatal vesicular acetylcholine uptake. In Danio rerio (Zebrafish), this protein is Vesicular glutamate transporter 3.